The following is a 591-amino-acid chain: Aspartate--tRNA ligase (591 aa).

Residue Glu-173 participates in L-aspartate binding. An aspartate region spans residues 197–200; it reads QLFK. Residue Arg-219 coordinates L-aspartate. ATP is bound by residues 219 to 221 and Gln-228; that span reads RDE. His-448 serves as a coordination point for L-aspartate. Residue Glu-482 coordinates ATP. Arg-489 serves as a coordination point for L-aspartate. 534 to 537 contacts ATP; sequence GLDR.

Belongs to the class-II aminoacyl-tRNA synthetase family. Type 1 subfamily. In terms of assembly, homodimer.

Its subcellular location is the cytoplasm. It carries out the reaction tRNA(Asp) + L-aspartate + ATP = L-aspartyl-tRNA(Asp) + AMP + diphosphate. In terms of biological role, catalyzes the attachment of L-aspartate to tRNA(Asp) in a two-step reaction: L-aspartate is first activated by ATP to form Asp-AMP and then transferred to the acceptor end of tRNA(Asp). This chain is Aspartate--tRNA ligase, found in Shewanella oneidensis (strain ATCC 700550 / JCM 31522 / CIP 106686 / LMG 19005 / NCIMB 14063 / MR-1).